Reading from the N-terminus, the 280-residue chain is Probable endonuclease 4 (280 aa).

Residues H69, H109, E145, D179, H182, H216, D229, H231, and E261 each contribute to the Zn(2+) site.

It belongs to the AP endonuclease 2 family. The cofactor is Zn(2+).

It catalyses the reaction Endonucleolytic cleavage to 5'-phosphooligonucleotide end-products.. Endonuclease IV plays a role in DNA repair. It cleaves phosphodiester bonds at apurinic or apyrimidinic (AP) sites, generating a 3'-hydroxyl group and a 5'-terminal sugar phosphate. This Actinobacillus pleuropneumoniae serotype 7 (strain AP76) protein is Probable endonuclease 4.